Reading from the N-terminus, the 351-residue chain is Rab9 effector protein with kelch motifs (351 aa).

Kelch repeat units follow at residues 54–102 (KIVI…PESE), 105–156 (SLWV…TNSA), 162–210 (LFVF…VITA), 214–263 (DIYI…TFNK), 264–313 (NIFI…LLPW), and 328–351 (LCFV…TVLT).

Rab9 effector required for endosome to trans-Golgi network (TGN) transport. The polypeptide is Rab9 effector protein with kelch motifs (rabepk) (Danio rerio (Zebrafish)).